A 101-amino-acid polypeptide reads, in one-letter code: Carboxysome shell vertex protein CcmL (101 aa).

Residues M1–D84 enclose the BMV domain.

Belongs to the CcmL/EutN family. CcmL subfamily. As to quaternary structure, homopentamer. Interacts with full-length CcmM.

Its subcellular location is the carboxysome. Its function is as follows. Probably forms vertices in the carboxysome, a polyhedral inclusion where RuBisCO (ribulose bisphosphate carboxylase, rbcL-rbcS) is sequestered. Has been modeled to induce curvature upon insertion into an otherwise flat hexagonal molecular layer of CcmK subunits. The chain is Carboxysome shell vertex protein CcmL from Nostoc sp. (strain PCC 7120 / SAG 25.82 / UTEX 2576).